We begin with the raw amino-acid sequence, 109 residues long: U16-hexatoxin-Hi1a (109 aa).

Residues 1-16 form the signal peptide; the sequence is LTGHLCCMMIWWQATQ. Positions 17 to 43 are excised as a propeptide; it reads VISPPLPVIREENNSHKMGVSLFPLKR.

Post-translationally, contains 2 disulfide bonds. As to expression, expressed by the venom gland.

The protein resides in the secreted. Its function is as follows. Probable ion channel inhibitor. This Hadronyche infensa (Fraser island funnel-web spider) protein is U16-hexatoxin-Hi1a.